A 166-amino-acid chain; its full sequence is Interleukin-3 (166 aa).

The first 26 residues, 1-26, serve as a signal peptide directing secretion; the sequence is MVLASSTTSIHTMLLLLLMLFHLGLQ. A glycan (N-linked (GlcNAc...) asparagine) is linked at asparagine 42. Intrachain disulfides connect cysteine 43-cysteine 106 and cysteine 105-cysteine 166. A glycan (N-linked (GlcNAc...) asparagine; partial) is linked at asparagine 112. Residues 145–166 are disordered; the sequence is LTSRPPQPASGSVSPNRGTVEC.

Belongs to the IL-3 family. In terms of assembly, monomer. In terms of tissue distribution, activated T-cells, mast cells, natural killer cells.

It localises to the secreted. Cytokine secreted predominantly by activated T-lymphocytes as well as mast cells and osteoblastic cells that controls the production and differentiation of hematopoietic progenitor cells into lineage-restricted cells. Also stimulates mature basophils, eosinophils, and monocytes to become functionally activated. In addition, plays an important role in neural cell proliferation and survival. Participates as well in bone homeostasis and inhibits osteoclast differentiation by preventing NF-kappa-B nuclear translocation and activation. Mechanistically, exerts its biological effects through a receptor composed of IL3RA subunit and a signal transducing subunit IL3RB. Receptor stimulation results in the rapid activation of JAK2 kinase activity leading to STAT5-mediated transcriptional program. Alternatively, contributes to cell survival under oxidative stress in non-hematopoietic systems by activating pathways mediated by PI3K/AKT and ERK. The chain is Interleukin-3 (Il3) from Mus musculus (Mouse).